A 449-amino-acid polypeptide reads, in one-letter code: tRNA-2-methylthio-N(6)-dimethylallyladenosine synthase (449 aa).

The 118-residue stretch at 2–119 (KGLFIRTYGC…LPEMIARASR (118 aa)) folds into the MTTase N-terminal domain. [4Fe-4S] cluster is bound by residues cysteine 11, cysteine 47, cysteine 82, cysteine 157, cysteine 161, and cysteine 164. The region spanning 143-378 (EADGPAAFVS…QALLREQQTE (236 aa)) is the Radical SAM core domain. The TRAM domain maps to 381 to 443 (ASQIGKTLPV…LNSLTGELVR (63 aa)).

The protein belongs to the methylthiotransferase family. MiaB subfamily. In terms of assembly, monomer. Requires [4Fe-4S] cluster as cofactor.

Its subcellular location is the cytoplasm. It catalyses the reaction N(6)-dimethylallyladenosine(37) in tRNA + (sulfur carrier)-SH + AH2 + 2 S-adenosyl-L-methionine = 2-methylsulfanyl-N(6)-dimethylallyladenosine(37) in tRNA + (sulfur carrier)-H + 5'-deoxyadenosine + L-methionine + A + S-adenosyl-L-homocysteine + 2 H(+). Its function is as follows. Catalyzes the methylthiolation of N6-(dimethylallyl)adenosine (i(6)A), leading to the formation of 2-methylthio-N6-(dimethylallyl)adenosine (ms(2)i(6)A) at position 37 in tRNAs that read codons beginning with uridine. This chain is tRNA-2-methylthio-N(6)-dimethylallyladenosine synthase, found in Hyphomonas neptunium (strain ATCC 15444).